The chain runs to 442 residues: UDP-N-acetylmuramoylalanine--D-glutamate ligase (442 aa).

Position 115–121 (115–121) interacts with ATP; the sequence is GSNGKST.

The protein belongs to the MurCDEF family.

It localises to the cytoplasm. The catalysed reaction is UDP-N-acetyl-alpha-D-muramoyl-L-alanine + D-glutamate + ATP = UDP-N-acetyl-alpha-D-muramoyl-L-alanyl-D-glutamate + ADP + phosphate + H(+). Its pathway is cell wall biogenesis; peptidoglycan biosynthesis. Cell wall formation. Catalyzes the addition of glutamate to the nucleotide precursor UDP-N-acetylmuramoyl-L-alanine (UMA). This is UDP-N-acetylmuramoylalanine--D-glutamate ligase from Vibrio vulnificus (strain YJ016).